A 217-amino-acid chain; its full sequence is tRNA (guanine-N(7)-)-methyltransferase (217 aa).

4 residues coordinate S-adenosyl-L-methionine: glutamate 48, glutamate 73, asparagine 100, and aspartate 123. Aspartate 123 is an active-site residue. Substrate is bound by residues lysine 127 and aspartate 159.

Belongs to the class I-like SAM-binding methyltransferase superfamily. TrmB family.

It catalyses the reaction guanosine(46) in tRNA + S-adenosyl-L-methionine = N(7)-methylguanosine(46) in tRNA + S-adenosyl-L-homocysteine. The protein operates within tRNA modification; N(7)-methylguanine-tRNA biosynthesis. Its function is as follows. Catalyzes the formation of N(7)-methylguanine at position 46 (m7G46) in tRNA. The protein is tRNA (guanine-N(7)-)-methyltransferase of Leptospira interrogans serogroup Icterohaemorrhagiae serovar Lai (strain 56601).